The chain runs to 267 residues: Phosphonates import ATP-binding protein PhnC 2 (267 aa).

Residues Leu-3–Gln-247 form the ABC transporter domain. Gly-36–Thr-43 provides a ligand contact to ATP.

The protein belongs to the ABC transporter superfamily. Phosphonates importer (TC 3.A.1.9.1) family. The complex is composed of two ATP-binding proteins (PhnC), two transmembrane proteins (PhnE) and a solute-binding protein (PhnD).

Its subcellular location is the cell inner membrane. It carries out the reaction phosphonate(out) + ATP + H2O = phosphonate(in) + ADP + phosphate + H(+). Part of the ABC transporter complex PhnCDE involved in phosphonates import. Responsible for energy coupling to the transport system. The protein is Phosphonates import ATP-binding protein PhnC 2 of Pseudomonas aeruginosa (strain UCBPP-PA14).